A 257-amino-acid polypeptide reads, in one-letter code: Zinc import ATP-binding protein ZnuC (257 aa).

Residues 6–221 enclose the ABC transporter domain; sequence VRLEQITVAF…AFVETFGHQV (216 aa). Residue 38-45 coordinates ATP; it reads GPNGAGKT.

This sequence belongs to the ABC transporter superfamily. Zinc importer (TC 3.A.1.15.5) family. As to quaternary structure, the complex is composed of two ATP-binding proteins (ZnuC), two transmembrane proteins (ZnuB) and a solute-binding protein (ZnuA).

Its subcellular location is the cell inner membrane. The catalysed reaction is Zn(2+)(out) + ATP(in) + H2O(in) = Zn(2+)(in) + ADP(in) + phosphate(in) + H(+)(in). In terms of biological role, part of the ABC transporter complex ZnuABC involved in zinc import. Responsible for energy coupling to the transport system. The sequence is that of Zinc import ATP-binding protein ZnuC from Marinobacter nauticus (strain ATCC 700491 / DSM 11845 / VT8) (Marinobacter aquaeolei).